Reading from the N-terminus, the 470-residue chain is uncharacterized protein (470 aa).

The interval 439-470 is disordered; it reads SIKSSKSKKQLKSSKSKKPIKHTKTKNIYVET. The segment covering 443 to 463 has biased composition (basic residues); that stretch reads SKSKKQLKSSKSKKPIKHTKT.

This is an uncharacterized protein from Acanthamoeba polyphaga mimivirus (APMV).